Here is a 2432-residue protein sequence, read N- to C-terminus: Polyprotein P1234 (2432 aa).

Residues 29 to 260 (ESLQVTPNDH…ESRKLLRSWH (232 aa)) enclose the Alphavirus-like MT domain. Positions 245–264 (GSTLYTESRKLLRSWHLPSV) are nsP1 membrane-binding. S-palmitoyl cysteine; by host attachment occurs at residues Cys-418 and Cys-420. The region spanning 692 to 844 (ELTNPPFHEF…HNICTEVCHK (153 aa)) is the (+)RNA virus helicase ATP-binding domain. 723–730 (GVPGSGKS) serves as a coordination point for a ribonucleoside 5'-triphosphate. The (+)RNA virus helicase C-terminal domain occupies 845-993 (SISRRCTRPV…LEEWQEEHDK (149 aa)). In terms of domain architecture, Peptidase C9 spans 1006-1329 (DAFQNKANVC…TKLSAVYAGE (324 aa)). Residues 1007–1026 (AFQNKANVCWAKSLVPVLDT) are nucleolus localization signal. Cys-1015 serves as the catalytic For cysteine protease nsP2 activity. Positions 1060-1069 (TKYYGVDLDS) match the Nuclear export signal motif. His-1085 (for cysteine protease nsP2 activity) is an active-site residue. A Nuclear localization signal motif is present at residues 1184 to 1188 (PRRRV). One can recognise a Macro domain in the interval 1337–1495 (APSYRVKRAD…KKIQEAIDMR (159 aa)). Residues Asp-1346, Asn-1360, Gly-1368, Gly-1448, Val-1449, and Phe-1450 each coordinate ADP-D-ribose. Positions 1598, 1600, 1623, and 1641 each coordinate Zn(2+). A phosphothreonine; by host mark is found at Thr-1680 and Thr-1681. A disordered region spans residues 1759–1779 (RAAERPVPAPRKPTPAPRTAF). Residues 1765 to 1774 (VPAPRKPTPA) are compositionally biased toward pro residues. 2 short sequence motifs (FGDF; binding to host G3BP1) span residues 1787 to 1790 (FGDF) and 1804 to 1807 (FGDF). One can recognise a RdRp catalytic domain in the interval 2182–2297 (GDPVLETDIA…VHGVISDKLM (116 aa)).

As to quaternary structure, interacts with non-structural protein 3. Interacts with RNA-directed RNA polymerase nsP4. Interacts with protease nsP2. interacts with itself. In terms of assembly, interacts with mRNA-capping enzyme nsP1. Interacts with host DDX1. Interacts with host DDX3. Interacts (via C-terminus) with host G3BP1; this interaction inhibits the formation of host stress granules on viral mRNAs and the nsp3-G3BP1 complexes bind viral RNAs and probably orchestrate the assembly of viral replication complexes. Interacts (via C-terminus) with host G3BP2; this interaction inhibits the formation of host stress granules on viral mRNAs and the nsp3-G3BP2 complexes bind viral RNAs and probably orchestrate the assembly of viral replication complexes. Interacts with mRNA-capping enzyme nsP1. Interacts with protease nsP2. interacts with itself. As to quaternary structure, interacts with RNA-directed RNA polymerase nsP4. Interacts with mRNA-capping enzyme nsP1. Interacts with KPNA1/karyopherin-alpha1; this interaction probably allows the active transport of protease nsP2 into the host nucleus. Mg(2+) is required as a cofactor. The cofactor is Mn(2+). In terms of processing, specific enzymatic cleavages in vivo yield mature proteins. The processing of the polyprotein is temporally regulated. In early stages (1.7 hpi), P1234 is first cleaved in trans through its nsP2 protease activity, releasing P123' and nsP4, which associate to form the early replication complex. At the same time, P1234 is also cut at the nsP1/nsP2 site early in infection but with lower efficiency. After replication of the viral minus-strand RNAs (4 hpi), the polyproteins are cut at the nsP1/nsP2 and nsP2/nsP3 sites very efficiently, preventing accumulation of P123' and P1234 and allowing the formation of the late replication complex. NsP3'/nsP4 site is not cleaved anymore and P34 is produced rather than nsP4. Specific enzymatic cleavages in vivo yield mature proteins. The processing of the polyprotein is temporally regulated. In early stages (1.7 hpi), P123' is cleaved at the nsP1/nsP2 site with low efficiency. After replication of the viral minus-strand RNAs (4 hpi), the polyproteins are cut at the nsP1/nsP2 and nsP2/nsP3 sites very efficiently, preventing accumulation of P123' and allowing the formation of the late replication complex. Post-translationally, specific enzymatic cleavages in vivo yield mature proteins. The processing of the polyprotein is temporally regulated. In early stages (1.7 hpi), P123 is cleaved at the nsP1/nsP2 site with low efficiency. After replication of the viral minus-strand RNAs (4 hpi), the polyproteins are cut at the nsP1/nsP2 and nsP2/nsP3 sites very efficiently, preventing accumulation of P123 and allowing the formation of the late replication complex. In terms of processing, palmitoylated by host palmitoyltransferases ZDHHC2 and ZDHHC19. Phosphorylated by host on serines and threonines. Post-translationally, ubiquitinated; targets the protein for rapid degradation via the ubiquitin system. Nsp4 is present in extremely low quantities due to low frequency of translation through the amber stop-codon and the degradation by the ubiquitin pathway.

The protein resides in the host cytoplasmic vesicle membrane. Its subcellular location is the host cell membrane. It localises to the host cell projection. The protein localises to the host filopodium. It is found in the host nucleus. The protein resides in the host cytoplasm. It carries out the reaction GTP + S-adenosyl-L-methionine = N(7)-methyl-GTP + S-adenosyl-L-homocysteine. The catalysed reaction is N(7)-methyl-GTP + L-histidyl-[protein] = N(tele)-(N(7)-methylguanosine 5'-phospho)-L-histidyl-[protein] + diphosphate. It catalyses the reaction N(tele)-(N(7)-methylguanosine 5'-phospho)-L-histidyl-[protein] + a 5'-end diphospho-(purine-ribonucleoside) in mRNA + H(+) = a 5'-end (N(7)-methyl 5'-triphosphoguanosine)-(purine-ribonucleoside) in mRNA + L-histidyl-[protein]. The enzyme catalyses a 5'-end triphospho-ribonucleoside in mRNA + H2O = a 5'-end diphospho-ribonucleoside in mRNA + phosphate + H(+). It carries out the reaction a ribonucleoside 5'-triphosphate + H2O = a ribonucleoside 5'-diphosphate + phosphate + H(+). The catalysed reaction is ATP + H2O = ADP + phosphate + H(+). It catalyses the reaction RNA(n) + a ribonucleoside 5'-triphosphate = RNA(n+1) + diphosphate. The enzyme catalyses RNA(n) + ATP = RNA(n)-3'-adenine ribonucleotide + diphosphate. It carries out the reaction 4-O-(ADP-D-ribosyl)-L-aspartyl-[protein] + H2O = L-aspartyl-[protein] + ADP-D-ribose + H(+). The catalysed reaction is 5-O-(ADP-D-ribosyl)-L-glutamyl-[protein] + H2O = L-glutamyl-[protein] + ADP-D-ribose + H(+). It catalyses the reaction ADP-alpha-D-ribose 1''-phosphate + H2O = ADP-D-ribose + phosphate. With respect to regulation, inhibited by N-ethylmaleimide, Zn(2+), and Cu2(2+). Its function is as follows. Inactive precursor of the viral replicase, which is activated by cleavages carried out by the viral protease nsP2. The early replication complex formed by the polyprotein P123 and nsP4 synthesizes minus-strand RNAs. As soon P123 is cleaved into mature proteins, the plus-strand RNAs synthesis begins. Functionally, the early replication complex formed by the polyprotein P123' and nsP4 synthesizes minus-strand RNAs. Polyprotein P123' is a short-lived polyprotein that accumulates during early stage of infection. As soon P123' is cleaved into mature proteins, the plus-strand RNAs synthesis begins. In terms of biological role, cytoplasmic capping enzyme that catalyzes two virus-specific reactions: methyltransferase and nsP1 guanylyltransferase. mRNA-capping is necessary since all viral RNAs are synthesized in the cytoplasm, and host capping enzymes are restricted to the nucleus. The enzymatic reaction involves a covalent link between 7-methyl-GMP and nsP1, whereas eukaryotic capping enzymes form a covalent complex only with GMP. nsP1 capping consists in the following reactions: GTP is first methylated into 7-methyl-GMP and then is covalently linked to nsP1 to form the m7GMp-nsP1 complex from which 7-methyl-GMP complex is transferred to the mRNA to create the cap structure. NsP1 is also needed for the initiation of the minus-strand RNAs synthesis. Probably serves as a membrane anchor for the replication complex composed of nsP1-nsP4. Palmitoylated nsP1 is remodeling host cell cytoskeleton, and induces filopodium-like structure formation at the surface of the host cell. Its function is as follows. Multifunctional protein whose N-terminus is part of the RNA polymerase complex and displays NTPase, RNA triphosphatase and helicase activities. NTPase and RNA triphosphatase are involved in viral RNA capping and helicase keeps a check on the dsRNA replication intermediates. The C-terminus harbors a protease that specifically cleaves and releases the mature proteins. Required for the shutoff of minus-strand RNAs synthesis. Specifically inhibits the host IFN response by promoting the nuclear export of host STAT1. Also inhibits host transcription by inducing rapid proteasome-dependent degradation of POLR2A, a catalytic subunit of the RNAPII complex. The resulting inhibition of cellular protein synthesis serves to ensure maximal viral gene expression and to evade host immune response. Seems to be essential for minus-strand RNAs and subgenomic 26S mRNAs synthesis. Displays mono-ADP-ribosylhydrolase activity. ADP-ribosylation is a post-translational modification that controls various processes of the host cell and the virus probably needs to revert it for optimal viral replication. Binds proteins of FXR family and sequesters them into the viral RNA replication complexes thereby inhibiting the formation of host stress granules on viral mRNAs. The nsp3'-FXR complexes bind viral RNAs and probably orchestrate the assembly of viral replication complexes, thanks to the ability of FXR family members to self-assemble and bind DNA. Functionally, seems to be essential for minus-strand RNAs and subgenomic 26S mRNAs synthesis. Displays mono-ADP-ribosylhydrolase activity. ADP-ribosylation is a post-translational modification that controls various processes of the host cell and the virus probably needs to revert it for optimal viral replication. Binds proteins of G3BP family and sequesters them into the viral RNA replication complexes thereby inhibiting the formation of host stress granules on viral mRNAs. The nsp3-G3BP complexes bind viral RNAs and probably orchestrate the assembly of viral replication complexes, thanks to the ability of G3BP family members to self-assemble and bind DNA. In terms of biological role, RNA dependent RNA polymerase. Replicates genomic and antigenomic RNA by recognizing replications specific signals. The early replication complex formed by the polyprotein P123 and nsP4 synthesizes minus-strand RNAs. The late replication complex composed of fully processed nsP1-nsP4 is responsible for the production of genomic and subgenomic plus-strand RNAs. This Aedes (Middle-African hedgehog) protein is Polyprotein P1234.